We begin with the raw amino-acid sequence, 104 residues long: Large ribosomal subunit protein bL21 (104 aa).

This sequence belongs to the bacterial ribosomal protein bL21 family. In terms of assembly, part of the 50S ribosomal subunit. Contacts protein L20.

Its function is as follows. This protein binds to 23S rRNA in the presence of protein L20. The sequence is that of Large ribosomal subunit protein bL21 from Clostridium botulinum (strain ATCC 19397 / Type A).